The primary structure comprises 71 residues: UPF0346 protein SUB0487 (71 aa).

It belongs to the UPF0346 family.

The chain is UPF0346 protein SUB0487 from Streptococcus uberis (strain ATCC BAA-854 / 0140J).